Here is a 165-residue protein sequence, read N- to C-terminus: Transcription antitermination protein NusB (165 aa).

This sequence belongs to the NusB family.

Its function is as follows. Involved in transcription antitermination. Required for transcription of ribosomal RNA (rRNA) genes. Binds specifically to the boxA antiterminator sequence of the ribosomal RNA (rrn) operons. This is Transcription antitermination protein NusB from Bradyrhizobium diazoefficiens (strain JCM 10833 / BCRC 13528 / IAM 13628 / NBRC 14792 / USDA 110).